A 2270-amino-acid polypeptide reads, in one-letter code: Protein DOP1B (2270 aa).

3 disordered regions span residues 548–572 (METP…VEGE), 697–716 (LKQR…TEEE), and 1084–1145 (QEQD…DMPR). Residues 1095–1145 (ADTSTGHNDSDNTSSFTPSSVDLSSDQNYRDNTAGQVTHKNTGQQNMDMPR) are compositionally biased toward polar residues.

This sequence belongs to the DOP1 family.

It localises to the golgi apparatus membrane. May be involved in protein traffic between late Golgi and early endosomes. In Xenopus laevis (African clawed frog), this protein is Protein DOP1B (dop1b).